Here is a 273-residue protein sequence, read N- to C-terminus: ATP synthase F(1) complex subunit gamma, mitochondrial (273 aa).

The residue at position 14 (Lys14) is an N6-acetyllysine. N6-succinyllysine is present on Lys24. An N6-acetyllysine modification is found at Lys30. Lys90 is modified (N6-acetyllysine; alternate). An N6-succinyllysine; alternate modification is found at Lys90. The residue at position 113 (Lys113) is an N6-acetyllysine. Ser121 carries the phosphoserine modification. Lys129 is subject to N6-acetyllysine; alternate. Residue Lys129 is modified to N6-succinyllysine; alternate. Lys172 is subject to N6-acetyllysine. Residue Lys245 is modified to N6-succinyllysine.

The protein belongs to the ATPase gamma chain family. As to quaternary structure, component of the ATP synthase complex composed at least of ATP5F1A/subunit alpha, ATP5F1B/subunit beta, ATP5MC1/subunit c (homooctomer), MT-ATP6/subunit a, MT-ATP8/subunit 8, ATP5ME/subunit e, ATP5MF/subunit f, ATP5MG/subunit g, ATP5MK/subunit k, ATP5MJ/subunit j, ATP5F1C/subunit gamma, ATP5F1D/subunit delta, ATP5F1E/subunit epsilon, ATP5PF/subunit F6, ATP5PB/subunit b, ATP5PD/subunit d, ATP5PO/subunit OSCP. ATP synthase complex consists of a soluble F(1) head domain (subunits alpha(3) and beta(3)) - the catalytic core - and a membrane F(0) domain - the membrane proton channel (subunits c, a, 8, e, f, g, k and j). These two domains are linked by a central stalk (subunits gamma, delta, and epsilon) rotating inside the F1 region and a stationary peripheral stalk (subunits F6, b, d, and OSCP). Interacts with FLVCR2; this interaction occurs in the absence of heme and is disrupted upon heme binding.

Its subcellular location is the mitochondrion inner membrane. Subunit gamma, of the mitochondrial membrane ATP synthase complex (F(1)F(0) ATP synthase or Complex V) that produces ATP from ADP in the presence of a proton gradient across the membrane which is generated by electron transport complexes of the respiratory chain. ATP synthase complex consist of a soluble F(1) head domain - the catalytic core - and a membrane F(1) domain - the membrane proton channel. These two domains are linked by a central stalk rotating inside the F(1) region and a stationary peripheral stalk. During catalysis, ATP synthesis in the catalytic domain of F(1) is coupled via a rotary mechanism of the central stalk subunits to proton translocation. In vivo, can only synthesize ATP although its ATP hydrolase activity can be activated artificially in vitro. With the central stalk subunit delta, is essential for the biogenesis of F(1) catalytic part of the ATP synthase complex namely in the formation of F1 assembly intermediate. This Rattus norvegicus (Rat) protein is ATP synthase F(1) complex subunit gamma, mitochondrial.